The sequence spans 168 residues: Large ribosomal subunit protein uL16 (168 aa).

The protein belongs to the universal ribosomal protein uL16 family.

The chain is Large ribosomal subunit protein uL16 from Thermofilum pendens (strain DSM 2475 / Hrk 5).